The primary structure comprises 339 residues: Ketol-acid reductoisomerase (NADP(+)) (339 aa).

Positions 1–182 constitute a KARI N-terminal Rossmann domain; that stretch reads MRVYYDRDAD…GGGRSGIIET (182 aa). Residues 24–27, Lys-48, Ser-51, Thr-53, and 83–86 each bind NADP(+); these read YGSQ and DELQ. His-108 is an active-site residue. Gly-134 contributes to the NADP(+) binding site. The KARI C-terminal knotted domain occupies 183–328; sequence NFKEECETDL…AKLRAMMPWI (146 aa). Mg(2+) is bound by residues Asp-191, Glu-195, Glu-227, and Glu-231. Position 252 (Ser-252) interacts with substrate.

This sequence belongs to the ketol-acid reductoisomerase family. Mg(2+) serves as cofactor.

The enzyme catalyses (2R)-2,3-dihydroxy-3-methylbutanoate + NADP(+) = (2S)-2-acetolactate + NADPH + H(+). It carries out the reaction (2R,3R)-2,3-dihydroxy-3-methylpentanoate + NADP(+) = (S)-2-ethyl-2-hydroxy-3-oxobutanoate + NADPH + H(+). The protein operates within amino-acid biosynthesis; L-isoleucine biosynthesis; L-isoleucine from 2-oxobutanoate: step 2/4. It functions in the pathway amino-acid biosynthesis; L-valine biosynthesis; L-valine from pyruvate: step 2/4. Its function is as follows. Involved in the biosynthesis of branched-chain amino acids (BCAA). Catalyzes an alkyl-migration followed by a ketol-acid reduction of (S)-2-acetolactate (S2AL) to yield (R)-2,3-dihydroxy-isovalerate. In the isomerase reaction, S2AL is rearranged via a Mg-dependent methyl migration to produce 3-hydroxy-3-methyl-2-ketobutyrate (HMKB). In the reductase reaction, this 2-ketoacid undergoes a metal-dependent reduction by NADPH to yield (R)-2,3-dihydroxy-isovalerate. This is Ketol-acid reductoisomerase (NADP(+)) from Rhizobium meliloti (strain 1021) (Ensifer meliloti).